A 77-amino-acid chain; its full sequence is Large ribosomal subunit protein uL24c (77 aa).

It belongs to the universal ribosomal protein uL24 family. In terms of assembly, part of the 50S ribosomal subunit.

It localises to the plastid. The protein resides in the chloroplast. In terms of biological role, one of two assembly initiator proteins, it binds directly to the 5'-end of the 23S rRNA, where it nucleates assembly of the 50S subunit. This is Large ribosomal subunit protein uL24c (rpl24) from Trieres chinensis (Marine centric diatom).